The following is a 504-amino-acid chain: MEKLQGHRELDRSWQHNFFYPLIFQEYIYVFAYDHALNKLILLENAIDKKYSLLIVKRLITRMYQQNHFILSVNDSNQNEIFGHKHKKNLYSQMITEGFAVIVEIPFSLLLISSLEGKEIVESQNLRSIHSIFPFLEDKFLHLNYVLDILIPYPAHLEILVQTLRYWLKDASSLHLLRYFLYEYRNWNSLIRPKESISPFSKRNRRFFLFLYNLLVYEYESIFVILRKQSSYLRSTSFGALLERIHFYGKIKYLVKVKVKVFGVILWLFKEPFLHYVRYQGKCLLASKGTSFLMYKWKYYFIAFWQCHFSVWSQPRRIYINQLSNYSLDFMGFISNVGLNSSVIRSQMLENSFLVDNIIKKFDTIVPIIPLVGSLAKAKFCNGLRHPISKSGWTDLSDADIIDRFGRICRNLSHYYSGSSRKKSLYRIKYILRLSCARTLSRKHKSTVRAFLKRLGSEFLEEFFTEEDKVLSLILPRDSSSSGFYRGRVWYLDIICIHNLANDE.

It belongs to the intron maturase 2 family. MatK subfamily.

The protein resides in the plastid. The protein localises to the chloroplast. Functionally, usually encoded in the trnK tRNA gene intron. Probably assists in splicing its own and other chloroplast group II introns. This chain is Maturase K, found in Amaranthus caudatus (Love-lies-bleeding).